The chain runs to 181 residues: MTADVNNLIWIDLEMTGLEPDVDRIIEIATLVTDQELNIIGQGPVIAIHQSDDVLAAMDDWNQKHHGESGLIDRVRASQETEAQAVAKTIAFLEQYVPKGASPMCGNSIGQDRRFLNRYMRELEDYFHYRNVDVSTIKELVKRWSPETMAGFKKQNTHQALQDIQESIAELQYYRSKVFKI.

The 164-residue stretch at 8–171 (LIWIDLEMTG…QDIQESIAEL (164 aa)) folds into the Exonuclease domain. The active site involves tyrosine 129.

Belongs to the oligoribonuclease family.

Its subcellular location is the cytoplasm. Functionally, 3'-to-5' exoribonuclease specific for small oligoribonucleotides. In Shewanella baltica (strain OS155 / ATCC BAA-1091), this protein is Oligoribonuclease.